Consider the following 160-residue polypeptide: Cyanate hydratase (160 aa).

Residues Arg100, Glu103, and Ser126 contribute to the active site.

It belongs to the cyanase family.

The catalysed reaction is cyanate + hydrogencarbonate + 3 H(+) = NH4(+) + 2 CO2. Catalyzes the reaction of cyanate with bicarbonate to produce ammonia and carbon dioxide. The protein is Cyanate hydratase of Arthroderma otae (strain ATCC MYA-4605 / CBS 113480) (Microsporum canis).